Here is a 77-residue protein sequence, read N- to C-terminus: Small ribosomal subunit protein bS21 (77 aa).

This sequence belongs to the bacterial ribosomal protein bS21 family.

In Methylococcus capsulatus (strain ATCC 33009 / NCIMB 11132 / Bath), this protein is Small ribosomal subunit protein bS21.